Here is a 367-residue protein sequence, read N- to C-terminus: Glutamate 5-kinase (367 aa).

Position 9 (Lys-9) interacts with ATP. Substrate is bound by residues Ser-49, Asp-136, and Asn-148. ATP is bound by residues 168–169 and 210–216; these read TD and TGGMKSK. Residues 276–350 enclose the PUA domain; sequence SGQIEVDAGA…GMQSQDIQAR (75 aa).

It belongs to the glutamate 5-kinase family.

It is found in the cytoplasm. It carries out the reaction L-glutamate + ATP = L-glutamyl 5-phosphate + ADP. The protein operates within amino-acid biosynthesis; L-proline biosynthesis; L-glutamate 5-semialdehyde from L-glutamate: step 1/2. Catalyzes the transfer of a phosphate group to glutamate to form L-glutamate 5-phosphate. This is Glutamate 5-kinase from Bacillus mycoides (strain KBAB4) (Bacillus weihenstephanensis).